The following is a 202-amino-acid chain: Ribosome maturation factor RimM (202 aa).

Residues 100–195 form the PRC barrel domain; that stretch reads ADEWYPKDLI…YLTLDPPGGL (96 aa).

The protein belongs to the RimM family. Binds ribosomal protein uS19.

It is found in the cytoplasm. Functionally, an accessory protein needed during the final step in the assembly of 30S ribosomal subunit, possibly for assembly of the head region. Essential for efficient processing of 16S rRNA. May be needed both before and after RbfA during the maturation of 16S rRNA. It has affinity for free ribosomal 30S subunits but not for 70S ribosomes. This is Ribosome maturation factor RimM from Bifidobacterium longum (strain NCC 2705).